A 421-amino-acid chain; its full sequence is Dihydroorotase (421 aa).

Zn(2+) contacts are provided by histidine 60 and histidine 62. Substrate contacts are provided by residues 62–64 (HFR) and asparagine 94. Aspartate 151, histidine 178, and histidine 231 together coordinate Zn(2+). Asparagine 277 serves as a coordination point for substrate. Aspartate 304 serves as a coordination point for Zn(2+). Residue aspartate 304 is part of the active site. Histidine 308 is a substrate binding site.

The protein belongs to the metallo-dependent hydrolases superfamily. DHOase family. Class I DHOase subfamily. Zn(2+) serves as cofactor.

It catalyses the reaction (S)-dihydroorotate + H2O = N-carbamoyl-L-aspartate + H(+). It participates in pyrimidine metabolism; UMP biosynthesis via de novo pathway; (S)-dihydroorotate from bicarbonate: step 3/3. In terms of biological role, catalyzes the reversible cyclization of carbamoyl aspartate to dihydroorotate. This Clostridioides difficile (strain 630) (Peptoclostridium difficile) protein is Dihydroorotase.